A 491-amino-acid chain; its full sequence is MKLKELMQAIPVYTGEASAAIEVNQIAQDSRKVQPGTLFICIDGEIVDGHQFADRAVQLGAVAIIAEKQLDVSVPVLYVRDSKRAMAMLADYFYGSPTQALKLVGITGTNGKTTVSHLVEQIVRENGEQTGLIGTMYRKIGDEILETKNTTPDSLTLQETFRDMLLSGVSTAVMEVSSHALVQGRVYGSDYDVAVFMNLSQDHLDYHHTMEEYAYAKSLLFAQLGNSYNLSNPKIAVLNADDKESVRMQTATAAHIITFGIKEPADFSASNIQITSHGSTFDLKTPVGDFALKIKMIGNFSVYNVLAAIATSFALRIPVINAIATVESIPGVKGRFELVNAGQDFPVIVDYSHTPDSLLNVLQTIDEFAEKRVFVVVGCGGDRDKGKRPQMAKIAVDYATNPIFTSDNPRSEDPHAIIEDMIQGVPGSDSYVVHENRRDAIRYAVNMAEAGDVILIAGKGHEDYQVIGDEVIDFDDRVEARIAIEKKLGLA.

Residue serine 30 coordinates UDP-N-acetyl-alpha-D-muramoyl-L-alanyl-D-glutamate. 108–114 contacts ATP; it reads GTNGKTT. Residues asparagine 149, 150–151, serine 177, glutamine 183, and arginine 185 contribute to the UDP-N-acetyl-alpha-D-muramoyl-L-alanyl-D-glutamate site; that span reads TT. At lysine 217 the chain carries N6-carboxylysine. Residues arginine 383, 407 to 410, glycine 458, and glutamate 462 contribute to the meso-2,6-diaminopimelate site; that span reads DNPR. Positions 407–410 match the Meso-diaminopimelate recognition motif motif; that stretch reads DNPR.

The protein belongs to the MurCDEF family. MurE subfamily. Mg(2+) serves as cofactor. In terms of processing, carboxylation is probably crucial for Mg(2+) binding and, consequently, for the gamma-phosphate positioning of ATP.

Its subcellular location is the cytoplasm. It catalyses the reaction UDP-N-acetyl-alpha-D-muramoyl-L-alanyl-D-glutamate + meso-2,6-diaminopimelate + ATP = UDP-N-acetyl-alpha-D-muramoyl-L-alanyl-gamma-D-glutamyl-meso-2,6-diaminopimelate + ADP + phosphate + H(+). Its pathway is cell wall biogenesis; peptidoglycan biosynthesis. In terms of biological role, catalyzes the addition of meso-diaminopimelic acid to the nucleotide precursor UDP-N-acetylmuramoyl-L-alanyl-D-glutamate (UMAG) in the biosynthesis of bacterial cell-wall peptidoglycan. This chain is UDP-N-acetylmuramoyl-L-alanyl-D-glutamate--2,6-diaminopimelate ligase, found in Listeria innocua serovar 6a (strain ATCC BAA-680 / CLIP 11262).